A 147-amino-acid polypeptide reads, in one-letter code: MVNEVIDINEAVRAYIAQIEGLRAEIGRLDATIATLRQSLATLKSLKTLGEGKTVLVPVGSIAQVEMKVEKMDKVVVSVGQNISAELEYEEALKYIEDEIKKLLTFRLVLEQAIAELYAKIEDLIAEAQQTSEEEKAEEEENEEKAE.

The protein belongs to the prefoldin subunit alpha family. Heterohexamer of two alpha and four beta subunits.

Its subcellular location is the cytoplasm. Its function is as follows. Molecular chaperone capable of stabilizing a range of proteins. Seems to fulfill an ATP-independent, HSP70-like function in archaeal de novo protein folding. The polypeptide is Prefoldin subunit alpha 2 (pfdA2) (Methanocaldococcus jannaschii (strain ATCC 43067 / DSM 2661 / JAL-1 / JCM 10045 / NBRC 100440) (Methanococcus jannaschii)).